The sequence spans 487 residues: MPPLDITDERLTREDTGYHKGLHSRQLQMIALGGAIGTGLFLGAGGRLASAGPGLFLVYGICGIFVFLILRALGELVLHRPSSGSFVSYAREFYGEKVAFVAGWMYFLNWAMTGIVDTTAIAHYCHYWRAFQPIPQWTLALIALLVVLSMNLISVRLFGELEFWASLIKVIALVTFLIVGTVFLAGRYKIDGQETGVSLWSSHGGIVPTGLLPIVLVTSGVVFAYAAIELVGIAAGETAEPAKIMPRAINSVVLRIACFYVGSTVLLALLLPYTAYKEHVSPFVTFFSKIGIDAAGSVMNLVVLTAALSSLNAGLYSTGRILRSMAINGSGPRFTAPMSKTGVPYGGILLTAGIGLLGIILNAIKPSQAFEIVLHIAATGVIAAWATIVACQLRLHRMANAGQLQRPKFRMPLSPFSGYLTLAFLAGVLILMYFDEQHGPWMIAATVIGVPALIGGWYLVRNRVTAVAHHAIDHTKSVAVVHSADPI.

12 helical membrane passes run 26 to 46 (QLQMIALGGAIGTGLFLGAGG), 50 to 70 (SAGPGLFLVYGICGIFVFLIL), 98 to 118 (VAFVAGWMYFLNWAMTGIVDT), 133 to 153 (PIPQWTLALIALLVVLSMNLI), 163 to 183 (FWASLIKVIALVTFLIVGTVF), 214 to 234 (IVLVTSGVVFAYAAIELVGIA), 256 to 276 (IACFYVGSTVLLALLLPYTAY), 290 to 310 (IGIDAAGSVMNLVVLTAALSS), 341 to 361 (TGVPYGGILLTAGIGLLGIIL), 369 to 389 (AFEIVLHIAATGVIAAWATIV), 414 to 434 (SPFSGYLTLAFLAGVLILMYF), and 440 to 460 (PWMIAATVIGVPALIGGWYLV).

This sequence belongs to the amino acid-polyamine-organocation (APC) superfamily. Amino acid transporter (AAT) (TC 2.A.3.1) family.

The protein resides in the cell membrane. Dual function in both nitrogen assimilation and in protection against acid stress during infection. Involved in asparagine uptake. In Mycobacterium bovis (strain ATCC BAA-935 / AF2122/97), this protein is L-asparagine permease 2 (ansP2).